Consider the following 125-residue polypeptide: Fluoride-specific ion channel FluC (125 aa).

The next 4 helical transmembrane spans lie at 6 to 26 (VLVMVGGALGSLARYWVGLGI), 35 to 55 (FLFGTLLVNLVGSFMLGGLFA), 66 to 86 (LLLLAGTGFCGGFTTFSALSI), and 100 to 120 (AMGYLLGSLLGGLAAGWAGYL). Na(+)-binding residues include glycine 76 and threonine 79.

Belongs to the fluoride channel Fluc/FEX (TC 1.A.43) family.

The protein resides in the cell inner membrane. The enzyme catalyses fluoride(in) = fluoride(out). With respect to regulation, na(+) is not transported, but it plays an essential structural role and its presence is essential for fluoride channel function. In terms of biological role, fluoride-specific ion channel. Important for reducing fluoride concentration in the cell, thus reducing its toxicity. The chain is Fluoride-specific ion channel FluC from Gloeobacter violaceus (strain ATCC 29082 / PCC 7421).